We begin with the raw amino-acid sequence, 1162 residues long: Enhanced level of genomic instability 1 (1162 aa).

Disordered stretches follow at residues 1–136, 144–163, 179–202, 249–319, 348–380, 611–634, and 666–697; these read MTDV…ADNQ, KAGK…KPKP, LGVN…ATPT, KTDA…TKKR, METP…RRSC, RSME…PNGE, and WSGN…SSSN. The span at 65–78 shows a compositional bias: basic residues; sequence KQKHREKHKRKREE. Over residues 79–111 the composition is skewed to basic and acidic residues; the sequence is KRRAALMEDQKSTTEEVKANAKEKPQPLREKSS. Positions 125-136 are enriched in polar residues; the sequence is PLKSSTPVADNQ. Basic residues predominate over residues 268–278; it reads KRLRGRPRSRR. Composition is skewed to low complexity over residues 666 to 676 and 684 to 697; these read WSGNGGSNRNS and DMSN…SSSN. Residue 703–710 coordinates ATP; the sequence is GPSSSGKT. Disordered stretches follow at residues 900–923 and 975–1008; these read GDST…SRLA and QAAG…SDGH. The span at 984-993 shows a compositional bias: basic residues; it reads AAKRKSRSPK. The span at 998–1008 shows a compositional bias: polar residues; the sequence is SSATGQKSDGH.

This sequence belongs to the ELG1 family. As to quaternary structure, component of a heteropentameric Elg1 RFC-like complex composed of one large subunit (elg1) and four small subunits (RfC4, RfC38, CG8142 and RfC3). As part of the complex, might interact with the Enok complex, composed of enok, Br140, Eaf6 and Ing5. Within the Enok complex, interacts directly with Br140. As to expression, expressed at higher levels in the germline nurse cells than in the somatic follicle cells.

The protein resides in the nucleus. Its function is as follows. Has an important role in DNA replication and in maintaining genome integrity during replication stress. Promotes PCNA deubiquitination. As component of the Elg1 RFC-like complex, regulates the functions of the DNA polymerase processivity factor PCNA by unloading it from DNA after replication during the S phase of the cell cycle. The PCNA-unloading might be regulated via interaction with the Enok acetyltransferase complex. Might have a role in restarting of stalled/regressed replication forks during replication stress. In the ovaries, has a role in nurse cell endoreplication. The polypeptide is Enhanced level of genomic instability 1 (Drosophila melanogaster (Fruit fly)).